Reading from the N-terminus, the 97-residue chain is Transcription and mRNA export factor SUS1 (97 aa).

It belongs to the ENY2 family. As to quaternary structure, component of the nuclear pore complex (NPC)-associated TREX-2 complex (transcription and export complex 2), composed of at least SUS1, SAC3, THP1, SEM1, and CDC31. TREX-2 contains 2 SUS1 chains. The TREX-2 complex interacts with the nucleoporin NUP1. Component of the 1.8 MDa SAGA transcription coactivator-HAT complex. SAGA is built of 5 distinct domains with specialized functions. Within the SAGA complex, SUS1, SGF11, SGF73 and UBP8 form an additional subcomplex of SAGA called the DUB module (deubiquitination module). Interacts directly with THP1, SAC3, SGF11, and with the RNA polymerase II.

Its subcellular location is the nucleus. The protein resides in the nucleoplasm. It is found in the cytoplasm. It localises to the P-body. Its function is as follows. Involved in mRNA export coupled transcription activation by association with both the TREX-2 and the SAGA complexes. At the promoters, SAGA is required for recruitment of the basal transcription machinery. It influences RNA polymerase II transcriptional activity through different activities such as TBP interaction and promoter selectivity, interaction with transcription activators, and chromatin modification through histone acetylation and deubiquitination. Within the SAGA complex, participates in a subcomplex required for deubiquitination of H2B and for the maintenance of steady-state H3 methylation levels. The TREX-2 complex functions in docking export-competent ribonucleoprotein particles (mRNPs) to the nuclear entrance of the nuclear pore complex (nuclear basket). TREX-2 participates in mRNA export and accurate chromatin positioning in the nucleus by tethering genes to the nuclear periphery. May also be involved in cytoplasmic mRNA decay by interaction with components of P-bodies. This is Transcription and mRNA export factor SUS1 from Meyerozyma guilliermondii (strain ATCC 6260 / CBS 566 / DSM 6381 / JCM 1539 / NBRC 10279 / NRRL Y-324) (Yeast).